The sequence spans 130 residues: Small ribosomal subunit protein uS9 (130 aa).

Residues 109 to 130 are disordered; that stretch reads RKKERKKYGQRAARARFQYSKR.

Belongs to the universal ribosomal protein uS9 family.

This is Small ribosomal subunit protein uS9 from Oleidesulfovibrio alaskensis (strain ATCC BAA-1058 / DSM 17464 / G20) (Desulfovibrio alaskensis).